We begin with the raw amino-acid sequence, 175 residues long: Shikimate kinase (175 aa).

Gly-11–Thr-16 is a binding site for ATP. Thr-15 is a Mg(2+) binding site. Positions 33, 57, and 79 each coordinate substrate. Arg-118 is an ATP binding site. Arg-140 contributes to the substrate binding site.

The protein belongs to the shikimate kinase family. As to quaternary structure, monomer. Requires Mg(2+) as cofactor.

Its subcellular location is the cytoplasm. The enzyme catalyses shikimate + ATP = 3-phosphoshikimate + ADP + H(+). It functions in the pathway metabolic intermediate biosynthesis; chorismate biosynthesis; chorismate from D-erythrose 4-phosphate and phosphoenolpyruvate: step 5/7. In terms of biological role, catalyzes the specific phosphorylation of the 3-hydroxyl group of shikimic acid using ATP as a cosubstrate. In Phocaeicola vulgatus (strain ATCC 8482 / DSM 1447 / JCM 5826 / CCUG 4940 / NBRC 14291 / NCTC 11154) (Bacteroides vulgatus), this protein is Shikimate kinase.